Here is a 478-residue protein sequence, read N- to C-terminus: Methionine aminopeptidase 2 (478 aa).

Residues 1 to 122 (MAGVEQAASF…TDPPSVPICD (122 aa)) are disordered. At alanine 2 the chain carries N-acetylalanine. Positions 36–46 (KKKRRKKKKGK) are enriched in basic residues. Position 60 is a phosphoserine; alternate (serine 60). The O-linked (GlcNAc) serine; alternate glycan is linked to serine 60. Residues 80–92 (ERDDDDEDGDGDA) show a composition bias toward acidic residues. The span at 97–109 (GKKKKKKKKKRGP) shows a compositional bias: basic residues. Histidine 231 contributes to the substrate binding site. A divalent metal cation is bound by residues aspartate 251, aspartate 262, and histidine 331. Histidine 339 is a substrate binding site. Positions 364 and 459 each coordinate a divalent metal cation.

This sequence belongs to the peptidase M24A family. Methionine aminopeptidase eukaryotic type 2 subfamily. Binds EIF2S1 at low magnesium concentrations. Interacts strongly with the eIF-2 gamma-subunit EIF2S3. It depends on Co(2+) as a cofactor. The cofactor is Zn(2+). Requires Mn(2+) as cofactor. Fe(2+) serves as cofactor. In terms of processing, contains approximately 12 O-linked N-acetylglucosamine (GlcNAc) residues. O-glycosylation is required for EIF2S1 binding.

It localises to the cytoplasm. It carries out the reaction Release of N-terminal amino acids, preferentially methionine, from peptides and arylamides.. In terms of biological role, cotranslationally removes the N-terminal methionine from nascent proteins. The N-terminal methionine is often cleaved when the second residue in the primary sequence is small and uncharged (Met-Ala-, Cys, Gly, Pro, Ser, Thr, or Val). Protects eukaryotic initiation factor EIF2S1 from translation-inhibiting phosphorylation by inhibitory kinases such as EIF2AK2/PKR and EIF2AK1/HCR. Plays a critical role in the regulation of protein synthesis. In Mus musculus (Mouse), this protein is Methionine aminopeptidase 2 (Metap2).